The sequence spans 233 residues: Small ribosomal subunit protein uS3 (233 aa).

The 69-residue stretch at 39 to 107 folds into the KH type-2 domain; it reads VREFLKAKLK…PVHVNIEEVR (69 aa). The tract at residues 209 to 233 is disordered; sequence PGQVSAEPTQPEKKMRKGGRNAAAN.

This sequence belongs to the universal ribosomal protein uS3 family. As to quaternary structure, part of the 30S ribosomal subunit. Forms a tight complex with proteins S10 and S14.

Binds the lower part of the 30S subunit head. Binds mRNA in the 70S ribosome, positioning it for translation. The polypeptide is Small ribosomal subunit protein uS3 (Laribacter hongkongensis (strain HLHK9)).